The chain runs to 164 residues: Xanthine-guanine phosphoribosyltransferase (164 aa).

Residues 41–42 (RG) and 98–106 (DDLTDTGKT) contribute to the 5-phospho-alpha-D-ribose 1-diphosphate site. Residue Asp99 coordinates Mg(2+). The guanine site is built by Asp102 and Ile145. The xanthine site is built by Asp102 and Ile145. GMP contacts are provided by residues 102–106 (DTGKT) and 144–145 (WI).

Belongs to the purine/pyrimidine phosphoribosyltransferase family. XGPT subfamily. Homotetramer. Mg(2+) is required as a cofactor.

It localises to the cell inner membrane. It carries out the reaction GMP + diphosphate = guanine + 5-phospho-alpha-D-ribose 1-diphosphate. The enzyme catalyses XMP + diphosphate = xanthine + 5-phospho-alpha-D-ribose 1-diphosphate. It catalyses the reaction IMP + diphosphate = hypoxanthine + 5-phospho-alpha-D-ribose 1-diphosphate. Its pathway is purine metabolism; GMP biosynthesis via salvage pathway; GMP from guanine: step 1/1. It functions in the pathway purine metabolism; XMP biosynthesis via salvage pathway; XMP from xanthine: step 1/1. In terms of biological role, purine salvage pathway enzyme that catalyzes the transfer of the ribosyl-5-phosphate group from 5-phospho-alpha-D-ribose 1-diphosphate (PRPP) to the N9 position of the 6-oxopurines guanine and xanthine to form the corresponding ribonucleotides GMP (guanosine 5'-monophosphate) and XMP (xanthosine 5'-monophosphate), with the release of PPi. To a lesser extent, also acts on hypoxanthine. In Rhizobium johnstonii (strain DSM 114642 / LMG 32736 / 3841) (Rhizobium leguminosarum bv. viciae), this protein is Xanthine-guanine phosphoribosyltransferase.